Consider the following 277-residue polypeptide: Phosphoenolpyruvate synthase regulatory protein (277 aa).

157–164 (GVSRCGKT) provides a ligand contact to ADP.

It belongs to the pyruvate, phosphate/water dikinase regulatory protein family. PSRP subfamily.

It catalyses the reaction [pyruvate, water dikinase] + ADP = [pyruvate, water dikinase]-phosphate + AMP + H(+). The enzyme catalyses [pyruvate, water dikinase]-phosphate + phosphate + H(+) = [pyruvate, water dikinase] + diphosphate. In terms of biological role, bifunctional serine/threonine kinase and phosphorylase involved in the regulation of the phosphoenolpyruvate synthase (PEPS) by catalyzing its phosphorylation/dephosphorylation. The chain is Phosphoenolpyruvate synthase regulatory protein from Escherichia coli O7:K1 (strain IAI39 / ExPEC).